Here is a 556-residue protein sequence, read N- to C-terminus: Interleukin-1 receptor-like 1 (556 aa).

Positions 1 to 18 (MGFWILAILTILMYSTAA) are cleaved as a signal peptide. Ig-like C2-type domains lie at 19–103 (KFSK…ANVT) and 114–197 (PDYL…VTAT). The Extracellular segment spans residues 19–328 (KFSKQSWGLE…SRKNPIDHHS (310 aa)). Cys-36 and Cys-87 are oxidised to a cystine. N-linked (GlcNAc...) asparagine glycosylation is found at Asn-54, Asn-95, Asn-101, Asn-140, and Asn-191. 2 disulfides stabilise this stretch: Cys-111-Cys-151 and Cys-133-Cys-181. The interval 198-211 (RSFTVKDEQGFSLF) is flexible linker. Residues 212-319 (PVIGAPAQNE…GLRRHTVRLS (108 aa)) form the Ig-like C2-type 3 domain. 3 N-linked (GlcNAc...) asparagine glycosylation sites follow: Asn-232, Asn-254, and Asn-273. Cystine bridges form between Cys-235/Cys-303 and Cys-238/Cys-282. A Glycyl lysine isopeptide (Lys-Gly) (interchain with G-Cter in ubiquitin) cross-link involves residue Lys-321. A helical membrane pass occupies residues 329-349 (IYCIIAVCSVFLMLINVLVII). The Cytoplasmic portion of the chain corresponds to 350 to 556 (LKMFWIEATL…SLTPLAAQKQ (207 aa)). The 161-residue stretch at 375 to 535 (KLYDAYVVYP…KFWKHVRYQM (161 aa)) folds into the TIR domain. Glu-461 is an active-site residue.

Belongs to the interleukin-1 receptor family. As to quaternary structure, interacts with MYD88, IRAK1, IRAK4, and TRAF6. Bound to its ligand IL-33, interacts with IL1RAP to form the minimal interleukin-33 signaling complex with a 1:1:1 stoichiometry. Interacts with KIT (bound to KITLG/SCF). A mast cell-specific KITLG/SCF-induced interleukin-33 signaling complex contains IL1RL1, IL1RAP, KIT and MYD88. Interacts with TMED1. In terms of processing, ubiquitinated at Lys-321 in a FBXL19-mediated manner; leading to proteasomal degradation. Ubiquitination by TRAF6 via 'Lys-27'-linked polyubiquitination and deubiquitination by USP38 serves as a critical regulatory mechanism for fine-tuning IL1RL1-mediated inflammatory response. In terms of tissue distribution, highly expressed in kidney, lung, placenta, stomach, skeletal muscle, colon and small intestine. Isoform A is prevalently expressed in the lung, testis, placenta, stomach and colon. Isoform B is more abundant in the brain, kidney and the liver. Isoform C is not detected in brain, heart, liver, kidney and skeletal muscle. Expressed on T-cells in fibrotic liver; at protein level. Overexpressed in fibrotic and cirrhotic liver.

Its subcellular location is the cell membrane. The protein resides in the secreted. The catalysed reaction is NAD(+) + H2O = ADP-D-ribose + nicotinamide + H(+). Its function is as follows. Receptor for interleukin-33 (IL-33) which plays crucial roles in innate and adaptive immunity, contributing to tissue homeostasis and responses to environmental stresses together with coreceptor IL1RAP. Its stimulation recruits MYD88, IRAK1, IRAK4, and TRAF6, followed by phosphorylation of MAPK3/ERK1 and/or MAPK1/ERK2, MAPK14, and MAPK8. Possibly involved in helper T-cell function. Upon tissue injury, induces UCP2-dependent mitochondrial rewiring that attenuates the generation of reactive oxygen species and preserves the integrity of Krebs cycle required for persistent production of itaconate and subsequent GATA3-dependent differentiation of inflammation-resolving alternatively activated macrophages. Inhibits IL-33 signaling. The polypeptide is Interleukin-1 receptor-like 1 (IL1RL1) (Homo sapiens (Human)).